A 364-amino-acid chain; its full sequence is D-alanine--D-alanine ligase (364 aa).

The ATP-grasp domain maps to 134–347 (RRLACINGLK…YPDLLDELIN (214 aa)). Position 167-222 (167-222 (ASEFGWPLFVKPCSLGSSVGIHKANNMDELNAAVADALRYDEEILVEEFIVGREIE)) interacts with ATP. 3 residues coordinate Mg(2+): Asp-300, Glu-314, and Asn-316.

Belongs to the D-alanine--D-alanine ligase family. Mg(2+) serves as cofactor. Requires Mn(2+) as cofactor.

The protein localises to the cytoplasm. The enzyme catalyses 2 D-alanine + ATP = D-alanyl-D-alanine + ADP + phosphate + H(+). The protein operates within cell wall biogenesis; peptidoglycan biosynthesis. In terms of biological role, cell wall formation. This chain is D-alanine--D-alanine ligase, found in Legionella pneumophila (strain Lens).